The primary structure comprises 150 residues: MKSKRHTKILEIIGSREIETQEELADALKKEGFDVTQATVSRDIKNLKLIKMQSTNGKSKYAVSTGEQKNIIDRLSNILANTVLSVENVDKMVVIKTITGSAPITAEAIDNLESADIAGTVAGDNTIFILVRSLESAEDLVDKIRKRMSS.

It belongs to the ArgR family.

It localises to the cytoplasm. It participates in amino-acid biosynthesis; L-arginine biosynthesis [regulation]. Functionally, regulates arginine biosynthesis genes. This chain is Arginine repressor, found in Clostridium beijerinckii (strain ATCC 51743 / NCIMB 8052) (Clostridium acetobutylicum).